A 469-amino-acid polypeptide reads, in one-letter code: 3-isopropylmalate dehydratase large subunit 2 (469 aa).

The [4Fe-4S] cluster site is built by Cys-347, Cys-408, and Cys-411.

The protein belongs to the aconitase/IPM isomerase family. LeuC type 1 subfamily. Heterodimer of LeuC and LeuD. [4Fe-4S] cluster is required as a cofactor.

The catalysed reaction is (2R,3S)-3-isopropylmalate = (2S)-2-isopropylmalate. Its pathway is amino-acid biosynthesis; L-leucine biosynthesis; L-leucine from 3-methyl-2-oxobutanoate: step 2/4. Catalyzes the isomerization between 2-isopropylmalate and 3-isopropylmalate, via the formation of 2-isopropylmaleate. This chain is 3-isopropylmalate dehydratase large subunit 2, found in Mannheimia succiniciproducens (strain KCTC 0769BP / MBEL55E).